A 508-amino-acid chain; its full sequence is MRFLSLVGNSFGCSASGERLVSAARDGDLQEAKALLDYNPRLARYSTFGVRNSPLHYSAAQGHHEIVSLLVESGVDINLRNYRGQTALMQACQHGHWEVVLILILFGANIHRSDYLNGGTALHLAALNGHPRCIRILLSEYIPSVPNCWSLLKNKKTSVAGFDSSVLHEVINRAADGGITPLHVAALNGHIETVQLLLDLGASVTQVTVEDGTTIDLIGAGSTALHYASCGGNTQCCQLLISKGACLAAVNSNGWTPMMVARSWHRNWLEEILNPTTEQPQLHLPNVPSPFLCLPLMSIVNIAQECGWRENDCLTPCRDPCAVCLERKCTVAADGCAHEFCTNCALYLSTTSITSSKTSNVTPGSVPCPLCRNGIVSFTKLPHTTATTRTSTSSRTSISLSFCTCSSDVLDTALLTNPHYSCKPVVSRTGSRTPQSARSSAFRSLSCRRFPPSLCLGGSDVDEPRSRLIGGSYSRSGVGFRRSTSQVEGKRSWFSALNHCVTTGGSAC.

ANK repeat units follow at residues 50–79, 83–112, 117–147, 177–206, and 220–249; these read VRNSPLHYSAAQGHHEIVSLLVESGVDINL, RGQTALMQACQHGHWEVVLILILFGANIHR, NGGTALHLAALNGHPRCIRILLSEYIPSVPN, GGITPLHVAALNGHIETVQLLLDLGASVTQ, and AGSTALHYASCGGNTQCCQLLISKGACLAA. The RING-type zinc finger occupies 321-372; it reads CAVCLERKCTVAADGCAHEFCTNCALYLSTTSITSSKTSNVTPGSVPCPLCR.

Interacts with ACS4 and ACS7. Expressed in the vascular system of primary root, vascular tissue of leaves, stems and anthers.

It catalyses the reaction S-ubiquitinyl-[E2 ubiquitin-conjugating enzyme]-L-cysteine + [acceptor protein]-L-lysine = [E2 ubiquitin-conjugating enzyme]-L-cysteine + N(6)-ubiquitinyl-[acceptor protein]-L-lysine.. It functions in the pathway protein modification; protein ubiquitination. E3 ubiquitin-protein ligase that mediates ubiquitination of ACC synthases (ACS). Negatively regulates ethylene biosynthesis probably via ubiquitin-dependent degradation of ACS4 and ACS7 enzymes. Regulates lateral root formation and development by controlling ethylene production which inhibits lateral root formation at high concentration. The polypeptide is E3 ubiquitin-protein ligase XBAT32 (XBAT32) (Arabidopsis thaliana (Mouse-ear cress)).